A 658-amino-acid polypeptide reads, in one-letter code: ATP-dependent DNA helicase Rep (658 aa).

One can recognise a UvrD-like helicase ATP-binding domain in the interval 1-280 (MSLNFNQKNA…IKMEQNYRSY (280 aa)). ATP-binding positions include 22–29 (AGAGSGKT) and R278. Positions 281–564 (GRILKAANKL…QLMTLHSSKG (284 aa)) constitute a UvrD-like helicase C-terminal domain.

The protein belongs to the helicase family. UvrD subfamily. As to quaternary structure, homodimer.

It catalyses the reaction Couples ATP hydrolysis with the unwinding of duplex DNA by translocating in the 3'-5' direction.. The enzyme catalyses ATP + H2O = ADP + phosphate + H(+). Rep helicase is a single-stranded DNA-dependent ATPase involved in DNA replication; it can initiate unwinding at a nick in the DNA. It binds to the single-stranded DNA and acts in a progressive fashion along the DNA in the 3' to 5' direction. The protein is ATP-dependent DNA helicase Rep of Buchnera aphidicola subsp. Schizaphis graminum (strain Sg).